The following is a 523-amino-acid chain: Maintenance of mitochondrial morphology protein 1 (523 aa).

The Lumenal portion of the chain corresponds to methionine 1–glycine 43. A helical transmembrane segment spans residues leucine 44–phenylalanine 64. Residues glycine 65 to threonine 523 are Cytoplasmic-facing. Disordered stretches follow at residues proline 70–threonine 118, threonine 295–glycine 349, arginine 420–glycine 473, and glycine 492–threonine 523. 3 stretches are compositionally biased toward polar residues: residues glycine 74–serine 96, serine 105–threonine 118, and threonine 295–glutamate 312. The 262-residue stretch at glutamine 151–proline 412 folds into the SMP-LTD domain. Residues glycine 449 to methionine 467 show a composition bias toward gly residues.

Belongs to the MMM1 family. In terms of assembly, homodimer. Component of the ER-mitochondria encounter structure (ERMES) or MDM complex, composed of MMM1, MDM10, MDM12 and MDM34. An MMM1 homodimer associates with one molecule of MDM12 on each side in a pairwise head-to-tail manner, and the SMP-LTD domains of MMM1 and MDM12 generate a continuous hydrophobic tunnel for phospholipid trafficking.

Its subcellular location is the endoplasmic reticulum membrane. In terms of biological role, component of the ERMES/MDM complex, which serves as a molecular tether to connect the endoplasmic reticulum (ER) and mitochondria. Components of this complex are involved in the control of mitochondrial shape and protein biogenesis, and function in nonvesicular lipid trafficking between the ER and mitochondria. The MDM12-MMM1 subcomplex functions in the major beta-barrel assembly pathway that is responsible for biogenesis of all outer membrane beta-barrel proteins, and acts in a late step after the SAM complex. The MDM10-MDM12-MMM1 subcomplex further acts in the TOM40-specific pathway after the action of the MDM12-MMM1 complex. Essential for establishing and maintaining the structure of mitochondria and maintenance of mtDNA nucleoids. This chain is Maintenance of mitochondrial morphology protein 1, found in Paracoccidioides brasiliensis (strain Pb03).